A 48-amino-acid polypeptide reads, in one-letter code: ATP synthase protein 8 (48 aa).

The chain crosses the membrane as a helical span at residues 13–32 (LTYGFLLMITLLILFSQFFL).

This sequence belongs to the ATPase protein 8 family. As to quaternary structure, F-type ATPases have 2 components, CF(1) - the catalytic core - and CF(0) - the membrane proton channel. In yeast, the dimeric form of ATP synthase consists of 17 polypeptides: alpha, beta, gamma, delta, epsilon, 4 (B), 5 (OSCP), 6 (A), 8, 9 (C), d, E (Tim11), f, g, h, i/j and k.

Its subcellular location is the mitochondrion membrane. Functionally, mitochondrial membrane ATP synthase (F(1)F(0) ATP synthase or Complex V) produces ATP from ADP in the presence of a proton gradient across the membrane which is generated by electron transport complexes of the respiratory chain. F-type ATPases consist of two structural domains, F(1) - containing the extramembraneous catalytic core and F(0) - containing the membrane proton channel, linked together by a central stalk and a peripheral stalk. During catalysis, ATP synthesis in the catalytic domain of F(1) is coupled via a rotary mechanism of the central stalk subunits to proton translocation. Part of the complex F(0) domain. Minor subunit located with subunit a in the membrane. This is ATP synthase protein 8 (ATP8) from Saccharomyces cerevisiae (strain ATCC 204508 / S288c) (Baker's yeast).